A 324-amino-acid polypeptide reads, in one-letter code: UDP-N-acetylenolpyruvoylglucosamine reductase (324 aa).

The FAD-binding PCMH-type domain maps to 36-217 (FRAGGLAELM…IRAEMDAVRA (182 aa)). Residue arginine 183 is part of the active site. Serine 232 serves as the catalytic Proton donor. Glutamate 302 is a catalytic residue.

It belongs to the MurB family. It depends on FAD as a cofactor.

Its subcellular location is the cytoplasm. The enzyme catalyses UDP-N-acetyl-alpha-D-muramate + NADP(+) = UDP-N-acetyl-3-O-(1-carboxyvinyl)-alpha-D-glucosamine + NADPH + H(+). The protein operates within cell wall biogenesis; peptidoglycan biosynthesis. Its function is as follows. Cell wall formation. The protein is UDP-N-acetylenolpyruvoylglucosamine reductase of Rhizobium rhizogenes (strain K84 / ATCC BAA-868) (Agrobacterium radiobacter).